A 91-amino-acid polypeptide reads, in one-letter code: Acylphosphatase (91 aa).

The region spanning 5–91 (CSKFIVSGHV…EHDYQGFEIL (87 aa)) is the Acylphosphatase-like domain. Residue Asn38 is part of the active site.

It belongs to the acylphosphatase family.

The enzyme catalyses an acyl phosphate + H2O = a carboxylate + phosphate + H(+). This Vibrio cholerae serotype O1 (strain ATCC 39541 / Classical Ogawa 395 / O395) protein is Acylphosphatase (acyP).